The following is a 471-amino-acid chain: Mitochondrial distribution and morphology protein 10 (471 aa).

Disordered stretches follow at residues 272–291 (TEMP…SNHG), 374–394 (ADTP…DEEN), and 436–455 (SWAA…GGVS). Residues 276-288 (SSSSSTSSTTTTS) show a composition bias toward low complexity. The span at 444 to 455 (AGGGQSVGGGVS) shows a compositional bias: gly residues.

It belongs to the MDM10 family. Component of the ER-mitochondria encounter structure (ERMES) or MDM complex, composed of mmm1, mdm10, mdm12 and mdm34. Associates with the mitochondrial outer membrane sorting assembly machinery SAM(core) complex.

The protein localises to the mitochondrion outer membrane. Component of the ERMES/MDM complex, which serves as a molecular tether to connect the endoplasmic reticulum and mitochondria. Components of this complex are involved in the control of mitochondrial shape and protein biogenesis and may function in phospholipid exchange. mdm10 is involved in the late assembly steps of the general translocase of the mitochondrial outer membrane (TOM complex). Functions in the tom40-specific route of the assembly of outer membrane beta-barrel proteins, including the association of tom40 with the receptor tom22 and small TOM proteins. Can associate with the SAM(core) complex as well as the mdm12-mmm1 complex, both involved in late steps of the major beta-barrel assembly pathway, that is responsible for biogenesis of all outer membrane beta-barrel proteins. May act as a switch that shuttles between both complexes and channels precursor proteins into the tom40-specific pathway. Plays a role in mitochondrial morphology and in the inheritance of mitochondria. The sequence is that of Mitochondrial distribution and morphology protein 10 (mdmB) from Neosartorya fischeri (strain ATCC 1020 / DSM 3700 / CBS 544.65 / FGSC A1164 / JCM 1740 / NRRL 181 / WB 181) (Aspergillus fischerianus).